The chain runs to 960 residues: Pentatricopeptide repeat-containing protein At3g63370, chloroplastic (960 aa).

Residues 1–64 (MEYAVTNMRL…PKLACFDGVL (64 aa)) constitute a chloroplast transit peptide. PPR repeat units lie at residues 79-109 (PVEAFAYVLELCGKRRAVSQGRQLHSRIFKT), 115-145 (LDFLAGKLVFMYGKCGSLDDAEKVFDEMPDR), 146-180 (TAFAWNTMIGAYVSNGEPASALALYWNMRVEGVPL), 181-215 (GLSSFPALLKACAKLRDIRSGSELHSLLVKLGYHS), 216-246 (TGFIVNALVSMYAKNDDLSAARRLFDGFQEK), 248-282 (DAVLWNSILSSYSTSGKSLETLELFREMHMTGPAP), 283-317 (NSYTIVSALTACDGFSYAKLGKEIHASVLKSSTHS), 319-349 (ELYVCNALIAMYTRCGKMPQAERILRQMNNA), 350-384 (DVVTWNSLIKGYVQNLMYKEALEFFSDMIAAGHKS), 385-419 (DEVSMTSIIAASGRLSNLLAGMELHAYVIKHGWDS), 420-450 (NLQVGNTLIDMYSKCNLTCYMGRAFLRMHDK), 451-485 (DLISWTTVIAGYAQNDCHVEALELFRDVAKKRMEI), 486-516 (DEMILGSILRASSVLKSMLIVKEIHCHILRK), 520-550 (DTVIQNELVDVYGKCRNMGYATRVFESIKGK), 551-585 (DVVSWTSMISSSALNGNESEAVELFRRMVETGLSA), 586-620 (DSVALLCILSAAASLSALNKGREIHCYLLRKGFCL), 621-651 (EGSIAVAVVDMYACCGDLQSAKAVFDRIERK), 652-686 (GLLQYTSMINAYGMHGCGKAAVELFDKMRHENVSP), 687-717 (DHISFLALLYACSHAGLLDEGRGFLKIMEHE), and 723-753 (WPEHYVCLVDMLGRANCVVEAFEFVKMMKTE). The type E motif stretch occupies residues 758-833 (VWCALLAACR…HPGCSWIEMD (76 aa)). The tract at residues 834–864 (GKVHKFTARDKSHPESKEIYEKLSEVTRKLE) is type E(+) motif. The interval 865 to 960 (REVGYVADTK…SGLCSCGDSW (96 aa)) is type DYW motif.

The protein belongs to the PPR family. PCMP-H subfamily.

It localises to the plastid. Its subcellular location is the chloroplast. Functionally, involved in RNA editing event in chloroplasts. Required for the editing of a single site in rps14 transcript. The sequence is that of Pentatricopeptide repeat-containing protein At3g63370, chloroplastic (PCMP-H83) from Arabidopsis thaliana (Mouse-ear cress).